Reading from the N-terminus, the 802-residue chain is Leucine--tRNA ligase (802 aa).

The short motif at 39–50 (PYPSGAGLHVGH) is the 'HIGH' region element. Residues 574–578 (KMSKS) carry the 'KMSKS' region motif. Lys-577 is an ATP binding site.

The protein belongs to the class-I aminoacyl-tRNA synthetase family.

It is found in the cytoplasm. It catalyses the reaction tRNA(Leu) + L-leucine + ATP = L-leucyl-tRNA(Leu) + AMP + diphosphate. This chain is Leucine--tRNA ligase, found in Macrococcus caseolyticus (strain JCSC5402) (Macrococcoides caseolyticum).